Consider the following 253-residue polypeptide: 5'-nucleotidase SurE (253 aa).

4 residues coordinate a divalent metal cation: Asp8, Asp9, Ser39, and Asn92.

The protein belongs to the SurE nucleotidase family. Requires a divalent metal cation as cofactor.

It is found in the cytoplasm. It carries out the reaction a ribonucleoside 5'-phosphate + H2O = a ribonucleoside + phosphate. In terms of biological role, nucleotidase that shows phosphatase activity on nucleoside 5'-monophosphates. This Burkholderia mallei (strain NCTC 10247) protein is 5'-nucleotidase SurE.